Here is a 474-residue protein sequence, read N- to C-terminus: Serine/threonine-protein kinase ksp1 (474 aa).

Residues 9 to 280 (YKVERPLNKG…EAVLAVTKWT (272 aa)) enclose the Protein kinase domain. ATP contacts are provided by residues 15–23 (LNKGSYGTV) and lysine 43. Catalysis depends on aspartate 137, which acts as the Proton acceptor. The disordered stretch occupies residues 345–373 (VDENISTSSSPRSPASLAPVNNSERSYDS). The segment covering 350–363 (STSSSPRSPASLAP) has biased composition (low complexity). A phosphoserine mark is found at serine 353, serine 354, serine 357, serine 378, serine 404, and serine 413.

Belongs to the protein kinase superfamily. Ser/Thr protein kinase family.

The protein resides in the cytoplasm. The protein localises to the nucleus. It catalyses the reaction L-seryl-[protein] + ATP = O-phospho-L-seryl-[protein] + ADP + H(+). It carries out the reaction L-threonyl-[protein] + ATP = O-phospho-L-threonyl-[protein] + ADP + H(+). The chain is Serine/threonine-protein kinase ksp1 (ksp1) from Schizosaccharomyces pombe (strain 972 / ATCC 24843) (Fission yeast).